Reading from the N-terminus, the 539-residue chain is CTP synthase (539 aa).

The tract at residues 1 to 267 (MTKYIFVTGG…DQKVCDFLHI (267 aa)) is amidoligase domain. S13 is a binding site for CTP. S13 is a binding site for UTP. 14 to 19 (SLGKGI) lines the ATP pocket. Y54 is a binding site for L-glutamine. D71 is a binding site for ATP. Mg(2+) contacts are provided by D71 and E141. CTP-binding positions include 148 to 150 (DME), 188 to 193 (KTKPTQ), and K224. Residues 188–193 (KTKPTQ) and K224 contribute to the UTP site. The Glutamine amidotransferase type-1 domain maps to 294–537 (KITLVGKYVE…IGAASGLPEQ (244 aa)). G356 contributes to the L-glutamine binding site. C383 acts as the Nucleophile; for glutamine hydrolysis in catalysis. L-glutamine-binding positions include 384 to 387 (LGMQ), E407, and R465. Catalysis depends on residues H510 and E512.

It belongs to the CTP synthase family. As to quaternary structure, homotetramer.

The enzyme catalyses UTP + L-glutamine + ATP + H2O = CTP + L-glutamate + ADP + phosphate + 2 H(+). It carries out the reaction L-glutamine + H2O = L-glutamate + NH4(+). It catalyses the reaction UTP + NH4(+) + ATP = CTP + ADP + phosphate + 2 H(+). It participates in pyrimidine metabolism; CTP biosynthesis via de novo pathway; CTP from UDP: step 2/2. Its activity is regulated as follows. Allosterically activated by GTP, when glutamine is the substrate; GTP has no effect on the reaction when ammonia is the substrate. The allosteric effector GTP functions by stabilizing the protein conformation that binds the tetrahedral intermediate(s) formed during glutamine hydrolysis. Inhibited by the product CTP, via allosteric rather than competitive inhibition. In terms of biological role, catalyzes the ATP-dependent amination of UTP to CTP with either L-glutamine or ammonia as the source of nitrogen. Regulates intracellular CTP levels through interactions with the four ribonucleotide triphosphates. The polypeptide is CTP synthase (Lactobacillus helveticus (strain DPC 4571)).